Consider the following 426-residue polypeptide: Glutamate-1-semialdehyde 2,1-aminomutase (426 aa).

N6-(pyridoxal phosphate)lysine is present on Lys265.

This sequence belongs to the class-III pyridoxal-phosphate-dependent aminotransferase family. HemL subfamily. As to quaternary structure, homodimer. Pyridoxal 5'-phosphate serves as cofactor.

The protein localises to the cytoplasm. It catalyses the reaction (S)-4-amino-5-oxopentanoate = 5-aminolevulinate. The protein operates within porphyrin-containing compound metabolism; protoporphyrin-IX biosynthesis; 5-aminolevulinate from L-glutamyl-tRNA(Glu): step 2/2. The chain is Glutamate-1-semialdehyde 2,1-aminomutase from Escherichia fergusonii (strain ATCC 35469 / DSM 13698 / CCUG 18766 / IAM 14443 / JCM 21226 / LMG 7866 / NBRC 102419 / NCTC 12128 / CDC 0568-73).